Here is a 424-residue protein sequence, read N- to C-terminus: Homoserine O-succinyltransferase (424 aa).

Positions 67–381 (NAVLVCHALN…PHGHDAFLLD (315 aa)) constitute an AB hydrolase-1 domain. Ser173 acts as the Nucleophile in catalysis. Arg243 contributes to the substrate binding site. Active-site residues include Asp342 and His375. A substrate-binding site is contributed by Asp376.

This sequence belongs to the AB hydrolase superfamily. MetX family. In terms of assembly, homodimer.

The protein resides in the cytoplasm. The catalysed reaction is L-homoserine + succinyl-CoA = O-succinyl-L-homoserine + CoA. Its pathway is amino-acid biosynthesis; L-methionine biosynthesis via de novo pathway; O-succinyl-L-homoserine from L-homoserine: step 1/1. Functionally, transfers a succinyl group from succinyl-CoA to L-homoserine, forming succinyl-L-homoserine. In vitro, also has serine succinyl transferase activity. This chain is Homoserine O-succinyltransferase, found in Bordetella petrii (strain ATCC BAA-461 / DSM 12804 / CCUG 43448).